The chain runs to 968 residues: RNA polymerase-associated protein RapA (968 aa).

One can recognise a Helicase ATP-binding domain in the interval 164-334 (DVGRRHAPRV…FARLRLLDPS (171 aa)). ATP is bound at residue 177–184 (DEVGLGKT). The short motif at 280-283 (DEAH) is the DEAH box element. One can recognise a Helicase C-terminal domain in the interval 490–644 (RVEWLMGHLT…TCPTGRAIYD (155 aa)).

The protein belongs to the SNF2/RAD54 helicase family. RapA subfamily. Interacts with the RNAP. Has a higher affinity for the core RNAP than for the holoenzyme. Its ATPase activity is stimulated by binding to RNAP.

Transcription regulator that activates transcription by stimulating RNA polymerase (RNAP) recycling in case of stress conditions such as supercoiled DNA or high salt concentrations. Probably acts by releasing the RNAP, when it is trapped or immobilized on tightly supercoiled DNA. Does not activate transcription on linear DNA. Probably not involved in DNA repair. This Citrobacter koseri (strain ATCC BAA-895 / CDC 4225-83 / SGSC4696) protein is RNA polymerase-associated protein RapA.